We begin with the raw amino-acid sequence, 328 residues long: UPF0104 membrane protein AF_2231 (328 aa).

The next 6 helical transmembrane spans lie at 31 to 51, 116 to 136, 139 to 159, 221 to 241, 245 to 265, and 277 to 297; these read NWLL…LWAL, ILDS…TGFS, FGFK…YILY, LVTL…LVAL, AYFL…LVPL, and MAYL…VGLW.

The protein belongs to the UPF0104 family.

Its subcellular location is the cell membrane. This Archaeoglobus fulgidus (strain ATCC 49558 / DSM 4304 / JCM 9628 / NBRC 100126 / VC-16) protein is UPF0104 membrane protein AF_2231.